A 281-amino-acid polypeptide reads, in one-letter code: Endonuclease III-like protein 1 (281 aa).

The N-terminal 17 residues, 1-17 (MCAAAPRGGGRAARRLG), are a transit peptide targeting the mitochondrion. The interval 1-60 (MCAAAPRGGGRAARRLGAATAGSRVPSAAPRYSRRTRRVPIAYEAEPKPESPGPKWEPEN) is disordered. Over residues 15–24 (RLGAATAGSR) the composition is skewed to low complexity. Residues 168-192 (KYGGDIPGTVEELVKLPGVGPKMAH) form the HhH domain. Lys189 (nucleophile; for N-glycosylase activity) is an active-site residue. Residues Cys259, Cys266, Cys269, and Cys275 each contribute to the [4Fe-4S] cluster site.

It belongs to the Nth/MutY family. Requires [4Fe-4S] cluster as cofactor.

The protein resides in the nucleus. Its subcellular location is the mitochondrion. The catalysed reaction is 2'-deoxyribonucleotide-(2'-deoxyribose 5'-phosphate)-2'-deoxyribonucleotide-DNA = a 3'-end 2'-deoxyribonucleotide-(2,3-dehydro-2,3-deoxyribose 5'-phosphate)-DNA + a 5'-end 5'-phospho-2'-deoxyribonucleoside-DNA + H(+). Bifunctional DNA N-glycosylase with associated apurinic/apyrimidinic (AP) lyase function that catalyzes the first step in base excision repair (BER), the primary repair pathway for the repair of oxidative DNA damage. The DNA N-glycosylase activity releases the damaged DNA base from DNA by cleaving the N-glycosidic bond, leaving an AP site. The AP lyase activity cleaves the phosphodiester bond 3' to the AP site by a beta-elimination. Primarily recognizes and repairs oxidative base damage of pyrimidines. This is Endonuclease III-like protein 1 from Gallus gallus (Chicken).